The following is a 2343-amino-acid chain: Coagulation factor VIII (2343 aa).

Residues 1–19 (MQVELYTCCFLCLLPFSLS) form the signal peptide. Plastocyanin-like domains are found at residues 20-199 (ATRK…LLVC) and 207-343 (ERTQ…VDSC). The F5/8 type A 1 domain occupies 20 to 343 (ATRKYYLGAV…MEAYVKVDSC (324 aa)). N233 and N253 each carry an N-linked (GlcNAc...) asparagine glycan. Residues Y359 and Y408 each carry the sulfotyrosine modification. Plastocyanin-like domains lie at 393–567 (KTWV…LLIC) and 577–724 (NQMM…VSSC). Positions 393–724 (KTWVHYIAAE…MTALLKVSSC (332 aa)) constitute an F5/8 type A 2 domain. N-linked (GlcNAc...) asparagine glycosylation occurs at N595. A sulfotyrosine mark is found at Y731, Y732, and Y736. Positions 752–761 (PRSFSQNSRH) are enriched in polar residues. 2 disordered regions span residues 752 to 774 (PRSF…ATTT) and 828 to 865 (ADDH…PEPE). Residues 754–1659 (SFSQNSRHPS…NPPVSKHHQR (906 aa)) form a b region. Composition is skewed to basic and acidic residues over residues 828–841 (ADDH…RNKG) and 850–861 (PELRHSEDREFT). 11 N-linked (GlcNAc...) asparagine glycosylation sites follow: N877, N921, N937, N938, N956, N1007, N1019, N1037, N1062, N1069, and N1080. The interval 1124–1147 (GKNSLSSEQRPSPKQLTSLGSEKS) is disordered. Polar residues predominate over residues 1125-1147 (KNSLSSEQRPSPKQLTSLGSEKS). Residues N1179, N1193, N1275, N1290, N1308, N1341, N1391, N1419, N1429, N1453, N1547, and N1618 are each glycosylated (N-linked (GlcNAc...) asparagine). The span at 1302 to 1314 (TTRMSSNASQHVI) shows a compositional bias: polar residues. The segment at 1302–1326 (TTRMSSNASQHVITQRGKRSLKQPR) is disordered. The disordered stretch occupies residues 1592 to 1632 (KSQKKSQTNTAFKRKDTILPLGPCENNDSTAAINEGQDKPQ). Y1675 and Y1691 each carry sulfotyrosine. Plastocyanin-like domains lie at 1705–1869 (KTRH…LLIC) and 1879–2032 (GRQV…SKKC). One can recognise an F5/8 type A 3 domain in the interval 1705–2032 (KTRHYFIAAV…TLFLVYSKKC (328 aa)). N-linked (GlcNAc...) asparagine glycosylation is present at N1821. F5/8 type C domains lie at 2032–2180 (CQTP…LLGC) and 2185–2337 (CSMP…VLGC). 2 disulfides stabilise this stretch: C2032–C2180 and C2185–C2337. N-linked (GlcNAc...) asparagine glycosylation is found at N2129 and N2281.

Belongs to the multicopper oxidase family. As to quaternary structure, interacts with vWF. vWF binding is essential for the stabilization of F8 in circulation. Post-translationally, proteolytically cleaved by cathepsin CTSG to produce a partially activated form.

It localises to the secreted. The protein localises to the extracellular space. In terms of biological role, factor VIII, along with calcium and phospholipid, acts as a cofactor for factor IXa when it converts factor X to the activated form, factor Xa. The sequence is that of Coagulation factor VIII (F8) from Canis lupus familiaris (Dog).